The sequence spans 38 residues: Zinc-containing ferredoxin (38 aa).

The segment covering 1-11 (GIDPNFRTSRP) has biased composition (polar residues). Residues 1-38 (GIDPNFRTSRPVTGDHAGHKVYAPADPPVKEKALGIHG) form a disordered region. The interval 1–38 (GIDPNFRTSRPVTGDHAGHKVYAPADPPVKEKALGIHG) is N-terminal extension. Zn(2+) is bound by residues His16 and His19. Residues 28–38 (PVKEKALGIHG) show a composition bias toward basic and acidic residues. Lys30 is modified (N6-methyllysine). Residue His37 participates in Zn(2+) binding.

[3Fe-4S] cluster is required as a cofactor. The cofactor is [4Fe-4S] cluster. Zn(2+) serves as cofactor.

Its function is as follows. Ferredoxins are iron-sulfur proteins that transfer electrons in a wide variety of metabolic reactions. The chain is Zinc-containing ferredoxin (zfx) from Metallosphaera prunae.